The primary structure comprises 402 residues: UDP-N-acetylmuramoylalanine--D-glutamate ligase (402 aa).

An ATP-binding site is contributed by G97–T103.

The protein belongs to the MurCDEF family.

The protein resides in the cytoplasm. It catalyses the reaction UDP-N-acetyl-alpha-D-muramoyl-L-alanine + D-glutamate + ATP = UDP-N-acetyl-alpha-D-muramoyl-L-alanyl-D-glutamate + ADP + phosphate + H(+). Its pathway is cell wall biogenesis; peptidoglycan biosynthesis. Functionally, cell wall formation. Catalyzes the addition of glutamate to the nucleotide precursor UDP-N-acetylmuramoyl-L-alanine (UMA). The protein is UDP-N-acetylmuramoylalanine--D-glutamate ligase of Campylobacter jejuni (strain RM1221).